We begin with the raw amino-acid sequence, 282 residues long: Cuticle collagen 8 (282 aa).

The signal sequence occupies residues 1-24; it reads MLVCVFVALYTMMGLLTDIKQLQS. The segment at 86–282 is disordered; sequence GPKSEGCPAG…CPCPGRSYKA (197 aa). Triple-helical region stretches follow at residues 95–124 and 141–269; these read GPPG…PGVI and GRPG…PGPD. A compositionally biased stretch (gly residues) spans 170–180; it reads TGGQGGPGEQG. The segment covering 214-224 has biased composition (pro residues); that stretch reads PPGPRGPPGPE. The segment covering 225–234 has biased composition (gly residues); the sequence is GNPGGAGEDG. Positions 235-244 are enriched in low complexity; that stretch reads NQGPVGHPGV.

The protein belongs to the cuticular collagen family. In terms of assembly, collagen polypeptide chains are complexed within the cuticle by disulfide bonds and other types of covalent cross-links.

Functionally, nematode cuticles are composed largely of collagen-like proteins. The cuticle functions both as an exoskeleton and as a barrier to protect the worm from its environment. In Caenorhabditis elegans, this protein is Cuticle collagen 8 (col-8).